The chain runs to 273 residues: 3-methyl-2-oxobutanoate hydroxymethyltransferase (273 aa).

Asp49 and Asp88 together coordinate Mg(2+). 3-methyl-2-oxobutanoate contacts are provided by residues 49-50 (DS), Asp88, and Lys118. A Mg(2+)-binding site is contributed by Glu120. Glu187 serves as the catalytic Proton acceptor.

It belongs to the PanB family. Homodecamer; pentamer of dimers. Mg(2+) serves as cofactor.

The protein resides in the cytoplasm. The catalysed reaction is 3-methyl-2-oxobutanoate + (6R)-5,10-methylene-5,6,7,8-tetrahydrofolate + H2O = 2-dehydropantoate + (6S)-5,6,7,8-tetrahydrofolate. It participates in cofactor biosynthesis; (R)-pantothenate biosynthesis; (R)-pantoate from 3-methyl-2-oxobutanoate: step 1/2. Its function is as follows. Catalyzes the reversible reaction in which hydroxymethyl group from 5,10-methylenetetrahydrofolate is transferred onto alpha-ketoisovalerate to form ketopantoate. The sequence is that of 3-methyl-2-oxobutanoate hydroxymethyltransferase from Sinorhizobium fredii (strain NBRC 101917 / NGR234).